The sequence spans 201 residues: MSRYRGPRFKKIRRLGALPGLTNKKPRTGSDLRNQSRSGKKSQYRIRLEEKQKLRFHYGLTERQLLKYVRIARKAKGSTGQVLLQLLEMRLDNILFRLGMASTIPAARQLVNHRHILVNGHIVDIPSYRCKPRDIITAKDEQKSRALIQISLDSSPHEELPNHLTLQPFQYKGLVNQIIDSKWVGLKINELLVVEYYSRQT.

Residues A17–Y44 are disordered. The S4 RNA-binding domain maps to M89–Q149.

The protein belongs to the universal ribosomal protein uS4 family. As to quaternary structure, part of the 30S ribosomal subunit. Contacts protein S5. The interaction surface between S4 and S5 is involved in control of translational fidelity.

It is found in the plastid. Its subcellular location is the chloroplast. In terms of biological role, one of the primary rRNA binding proteins, it binds directly to 16S rRNA where it nucleates assembly of the body of the 30S subunit. Functionally, with S5 and S12 plays an important role in translational accuracy. In Solanum bulbocastanum (Wild potato), this protein is Small ribosomal subunit protein uS4c (rps4).